Consider the following 99-residue polypeptide: Co-chaperonin GroES (99 aa).

The protein belongs to the GroES chaperonin family. Heptamer of 7 subunits arranged in a ring. Interacts with the chaperonin GroEL.

The protein localises to the cytoplasm. Together with the chaperonin GroEL, plays an essential role in assisting protein folding. The GroEL-GroES system forms a nano-cage that allows encapsulation of the non-native substrate proteins and provides a physical environment optimized to promote and accelerate protein folding. GroES binds to the apical surface of the GroEL ring, thereby capping the opening of the GroEL channel. The chain is Co-chaperonin GroES from Rhodococcus erythropolis (strain PR4 / NBRC 100887).